The primary structure comprises 130 residues: Putative F-box protein At1g77880 (130 aa).

The F-box domain maps to Lys-18 to Arg-64.

This chain is Putative F-box protein At1g77880, found in Arabidopsis thaliana (Mouse-ear cress).